The following is a 384-amino-acid chain: Putative glutamate--cysteine ligase 2 (384 aa).

Belongs to the glutamate--cysteine ligase type 2 family. YbdK subfamily.

The enzyme catalyses L-cysteine + L-glutamate + ATP = gamma-L-glutamyl-L-cysteine + ADP + phosphate + H(+). Its function is as follows. ATP-dependent carboxylate-amine ligase which exhibits weak glutamate--cysteine ligase activity. The chain is Putative glutamate--cysteine ligase 2 from Dechloromonas aromatica (strain RCB).